Consider the following 362-residue polypeptide: Endopolygalacturonase II (362 aa).

The signal sequence occupies residues 1–21 (MHSFASLLAYGLAASATLASA). The propeptide occupies 22–27 (SPIEAR). Cys30 and Cys45 are oxidised to a cystine. The PbH1 1 repeat unit spans residues 156–186 (ADDITLTDITINNADGDTLGGHNTDAFDVGN). Asp201 acts as the Proton donor in catalysis. A disulfide bond links Cys203 and Cys219. Residue His223 is part of the active site. PbH1 repeat units lie at residues 238–259 (VKNV…RIKT), 267–289 (VSEI…VIQQ), and 301–322 (TNGV…DSKA). Residue Asn240 is glycosylated (N-linked (GlcNAc...) (high mannose) asparagine). 2 cysteine pairs are disulfide-bonded: Cys329–Cys334 and Cys353–Cys362.

This sequence belongs to the glycosyl hydrolase 28 family.

It localises to the secreted. It catalyses the reaction (1,4-alpha-D-galacturonosyl)n+m + H2O = (1,4-alpha-D-galacturonosyl)n + (1,4-alpha-D-galacturonosyl)m.. Functionally, involved in maceration and soft-rotting of plant tissue. Hydrolyzes the 1,4-alpha glycosidic bonds of de-esterified pectate in the smooth region of the plant cell wall. The polypeptide is Endopolygalacturonase II (Aspergillus niger).